The chain runs to 458 residues: MRREWVAKRQGHANVSQMHYARQGIITEEMDYVAKRENLPAELIRDEVARGRMIIPANINHLNLEPMAIGIASKCKVNANIGASPNSSNLEEEVAKLNLAVKYGADTVMDLSTGGGNLDQIRTAIINASPVPIGTVPIYQALESVHGTIEKLTPDDFLHVIEKHAQQGVDYMTIHAGILIEYLPLVRNRITGIVSRGGGIIARWMLHHHKQNPLYTHFRDIIEIFKKYDVSFSLGDSLRPGCQHDASDEAQLSELKTLGQLTRKAWEHNVQVMVEGPGHVPMDQIEFNVRKQMEECSEAPFYVLGPLVTDIAPGYDHITSAIGAALAGWYGTAMLCYVTPKEHLGLPNAEDVRNGLIAYKIAAHAADIARHRPGARDRDDELSKARYNFDWNRQFELALDPDRAREYHDETLPADIYKTAEFCSMCGPKFCPMQTKVDADALTELEKFLAKQPTGTSV.

Residues asparagine 80, methionine 109, tyrosine 139, histidine 175, 195-197 (SRG), 236-239 (DSLR), and glutamate 275 contribute to the substrate site. Position 279 (histidine 279) interacts with Zn(2+). A substrate-binding site is contributed by tyrosine 302. Position 343 (histidine 343) interacts with Zn(2+). Cysteine 423, cysteine 426, and cysteine 431 together coordinate [4Fe-4S] cluster.

Belongs to the ThiC family. The cofactor is [4Fe-4S] cluster.

The enzyme catalyses 5-amino-1-(5-phospho-beta-D-ribosyl)imidazole + S-adenosyl-L-methionine = 4-amino-2-methyl-5-(phosphooxymethyl)pyrimidine + CO + 5'-deoxyadenosine + formate + L-methionine + 3 H(+). Its pathway is cofactor biosynthesis; thiamine diphosphate biosynthesis. Functionally, catalyzes the synthesis of the hydroxymethylpyrimidine phosphate (HMP-P) moiety of thiamine from aminoimidazole ribotide (AIR) in a radical S-adenosyl-L-methionine (SAM)-dependent reaction. This is Phosphomethylpyrimidine synthase from Cyanothece sp. (strain PCC 7425 / ATCC 29141).